The sequence spans 299 residues: ATP phosphoribosyltransferase (299 aa).

This sequence belongs to the ATP phosphoribosyltransferase family. Long subfamily. Equilibrium between an active dimeric form, an inactive hexameric form and higher aggregates. Interconversion between the various forms is largely reversible and is influenced by the natural substrates and inhibitors of the enzyme. Mg(2+) serves as cofactor.

The protein resides in the cytoplasm. The enzyme catalyses 1-(5-phospho-beta-D-ribosyl)-ATP + diphosphate = 5-phospho-alpha-D-ribose 1-diphosphate + ATP. It functions in the pathway amino-acid biosynthesis; L-histidine biosynthesis; L-histidine from 5-phospho-alpha-D-ribose 1-diphosphate: step 1/9. With respect to regulation, feedback inhibited by histidine. Its function is as follows. Catalyzes the condensation of ATP and 5-phosphoribose 1-diphosphate to form N'-(5'-phosphoribosyl)-ATP (PR-ATP). Has a crucial role in the pathway because the rate of histidine biosynthesis seems to be controlled primarily by regulation of HisG enzymatic activity. The chain is ATP phosphoribosyltransferase from Escherichia coli O8 (strain IAI1).